Reading from the N-terminus, the 247-residue chain is Osmotin-like protein NP24-I (247 aa).

The first 21 residues, 1-21 (MGYLTSSFVLFFLLCVTYTYA), serve as a signal peptide directing secretion. 8 disulfides stabilise this stretch: cysteine 30-cysteine 225, cysteine 72-cysteine 82, cysteine 87-cysteine 93, cysteine 141-cysteine 213, cysteine 146-cysteine 196, cysteine 154-cysteine 164, cysteine 168-cysteine 177, and cysteine 178-cysteine 183.

It belongs to the thaumatin family. In terms of tissue distribution, highest levels of both isoforms found in the outer pericarp, with smaller amounts in the inner pericarp.

It localises to the cytoplasm. The protein resides in the vacuole. It catalyses the reaction Endohydrolysis of (1-&gt;3)- or (1-&gt;4)-linkages in beta-D-glucans when the glucose residue whose reducing group is involved in the linkage to be hydrolyzed is itself substituted at C-3.. Its function is as follows. Has antifungal activity against P.betae and F.dahliae. May be involved in disease resistance in tomatoes and/or have a possible role in fruit development and ripening. Binds to beta-glucans and exhibits beta-1,3-D-glucanase activity. The sequence is that of Osmotin-like protein NP24-I from Solanum lycopersicum (Tomato).